The sequence spans 294 residues: Halotolerance protein HAL1 (294 aa).

The disordered stretch occupies residues 115–153; it reads LKRGTKEQEDINSSTSKKSAVINNFSGEKTPNPRPQSSN. A compositionally biased stretch (polar residues) spans 125 to 153; the sequence is INSSTSKKSAVINNFSGEKTPNPRPQSSN. Phosphoserine is present on S266.

The protein localises to the cytoplasm. In terms of biological role, involved in salt tolerance. In Saccharomyces cerevisiae (strain ATCC 204508 / S288c) (Baker's yeast), this protein is Halotolerance protein HAL1 (HAL1).